A 762-amino-acid chain; its full sequence is 5-methyltetrahydropteroyltriglutamate--homocysteine methyltransferase (762 aa).

5-methyltetrahydropteroyltri-L-glutamate contacts are provided by residues 17–20 (REWK) and Lys-111. Residues 435-437 (IGS) and Glu-488 contribute to the L-homocysteine site. Residues 435 to 437 (IGS) and Glu-488 contribute to the L-methionine site. 5-methyltetrahydropteroyltri-L-glutamate is bound by residues 519–520 (RC) and Trp-565. L-homocysteine is bound at residue Asp-603. Asp-603 provides a ligand contact to L-methionine. Glu-609 contacts 5-methyltetrahydropteroyltri-L-glutamate. Residues His-645, Cys-647, and Glu-669 each coordinate Zn(2+). The active-site Proton donor is His-698. Cys-730 serves as a coordination point for Zn(2+).

Belongs to the vitamin-B12 independent methionine synthase family. Zn(2+) serves as cofactor.

It catalyses the reaction 5-methyltetrahydropteroyltri-L-glutamate + L-homocysteine = tetrahydropteroyltri-L-glutamate + L-methionine. It functions in the pathway amino-acid biosynthesis; L-methionine biosynthesis via de novo pathway; L-methionine from L-homocysteine (MetE route): step 1/1. In terms of biological role, catalyzes the transfer of a methyl group from 5-methyltetrahydrofolate to homocysteine resulting in methionine formation. The protein is 5-methyltetrahydropteroyltriglutamate--homocysteine methyltransferase of Bacillus cereus (strain ATCC 10987 / NRS 248).